The sequence spans 180 residues: NADH-quinone oxidoreductase subunit I (180 aa).

2 consecutive 4Fe-4S ferredoxin-type domains span residues 50 to 80 (LTRDPDGEERCVACNLCAVACPVGCISLQKA) and 90 to 119 (EFFRINFSRCIFCGLCEEACPTTAIQLTPD). Residues C60, C63, C66, C70, C99, C102, C105, and C109 each contribute to the [4Fe-4S] cluster site.

It belongs to the complex I 23 kDa subunit family. NDH-1 is composed of 13 different subunits. Subunits NuoA, H, J, K, L, M, N constitute the membrane sector of the complex. Requires [4Fe-4S] cluster as cofactor.

The protein resides in the cell inner membrane. The catalysed reaction is a quinone + NADH + 5 H(+)(in) = a quinol + NAD(+) + 4 H(+)(out). NDH-1 shuttles electrons from NADH, via FMN and iron-sulfur (Fe-S) centers, to quinones in the respiratory chain. The immediate electron acceptor for the enzyme in this species is believed to be ubiquinone. Couples the redox reaction to proton translocation (for every two electrons transferred, four hydrogen ions are translocated across the cytoplasmic membrane), and thus conserves the redox energy in a proton gradient. The polypeptide is NADH-quinone oxidoreductase subunit I (Salmonella choleraesuis (strain SC-B67)).